Reading from the N-terminus, the 237-residue chain is Orotidine 5'-phosphate decarboxylase (237 aa).

Substrate is bound by residues D11, K34, 61–70 (DLKLHDIPNT), T124, R186, Q195, G215, and R216. K63 functions as the Proton donor in the catalytic mechanism.

This sequence belongs to the OMP decarboxylase family. Type 1 subfamily. In terms of assembly, homodimer.

It catalyses the reaction orotidine 5'-phosphate + H(+) = UMP + CO2. The protein operates within pyrimidine metabolism; UMP biosynthesis via de novo pathway; UMP from orotate: step 2/2. In terms of biological role, catalyzes the decarboxylation of orotidine 5'-monophosphate (OMP) to uridine 5'-monophosphate (UMP). The sequence is that of Orotidine 5'-phosphate decarboxylase from Lactococcus lactis subsp. cremoris (strain MG1363).